Consider the following 152-residue polypeptide: Small ribosomal subunit protein uS13 (152 aa).

N-acetylserine is present on Ser-2. Lys-91 is covalently cross-linked (Glycyl lysine isopeptide (Lys-Gly) (interchain with G-Cter in SUMO2)). An N6-acetyllysine; alternate mark is found at Lys-94 and Lys-106. Residues Lys-94 and Lys-106 each participate in a glycyl lysine isopeptide (Lys-Gly) (interchain with G-Cter in SUMO2); alternate cross-link.

It belongs to the universal ribosomal protein uS13 family. In terms of assembly, component of the small ribosomal subunit.

Its subcellular location is the cytoplasm. Its function is as follows. Component of the small ribosomal subunit. The ribosome is a large ribonucleoprotein complex responsible for the synthesis of proteins in the cell. The sequence is that of Small ribosomal subunit protein uS13 (RPS18) from Homo sapiens (Human).